The chain runs to 264 residues: Thymidylate synthase (264 aa).

Residue R21 participates in dUMP binding. H51 serves as a coordination point for (6R)-5,10-methylene-5,6,7,8-tetrahydrofolate. A dUMP-binding site is contributed by 126 to 127 (RR). C146 functions as the Nucleophile in the catalytic mechanism. DUMP contacts are provided by residues 166 to 169 (RSGD), N177, and 207 to 209 (HLY). D169 serves as a coordination point for (6R)-5,10-methylene-5,6,7,8-tetrahydrofolate. A263 is a (6R)-5,10-methylene-5,6,7,8-tetrahydrofolate binding site.

It belongs to the thymidylate synthase family. Bacterial-type ThyA subfamily. In terms of assembly, homodimer.

The protein resides in the cytoplasm. It catalyses the reaction dUMP + (6R)-5,10-methylene-5,6,7,8-tetrahydrofolate = 7,8-dihydrofolate + dTMP. It functions in the pathway pyrimidine metabolism; dTTP biosynthesis. Functionally, catalyzes the reductive methylation of 2'-deoxyuridine-5'-monophosphate (dUMP) to 2'-deoxythymidine-5'-monophosphate (dTMP) while utilizing 5,10-methylenetetrahydrofolate (mTHF) as the methyl donor and reductant in the reaction, yielding dihydrofolate (DHF) as a by-product. This enzymatic reaction provides an intracellular de novo source of dTMP, an essential precursor for DNA biosynthesis. In Xanthomonas campestris pv. campestris (strain 8004), this protein is Thymidylate synthase.